Here is a 133-residue protein sequence, read N- to C-terminus: ATP synthase epsilon chain (133 aa).

Residues 103–133 (VSQMEGQEPSTEKIKAQQNFNRARARVQATK) form a disordered region.

Belongs to the ATPase epsilon chain family. As to quaternary structure, F-type ATPases have 2 components, CF(1) - the catalytic core - and CF(0) - the membrane proton channel. CF(1) has five subunits: alpha(3), beta(3), gamma(1), delta(1), epsilon(1). CF(0) has three main subunits: a, b and c.

Its subcellular location is the cellular thylakoid membrane. Functionally, produces ATP from ADP in the presence of a proton gradient across the membrane. The protein is ATP synthase epsilon chain of Prochlorococcus marinus (strain MIT 9313).